The sequence spans 321 residues: Pirin-like protein 2 (321 aa).

Residues H88, H90, H132, and E134 each contribute to the Fe cation site.

This sequence belongs to the pirin family. As to quaternary structure, interacts with RD21A, RD21B and XCP2.

Its subcellular location is the cytoplasm. It is found in the cytosol. It localises to the nucleus. Functionally, involved in susceptibility to the bacterial plant pathogen Ralstonia solanacearum. Stabilizes the xylem cysteine protease XCP2 by blocking its autolysis. This is Pirin-like protein 2 from Arabidopsis thaliana (Mouse-ear cress).